The chain runs to 138 residues: uncharacterized protein (138 aa).

The next 2 helical transmembrane spans lie at 1–21 (MEIG…EAIV) and 46–66 (YAFI…HKFV).

The protein localises to the cell membrane. This is an uncharacterized protein from Methanocaldococcus jannaschii (strain ATCC 43067 / DSM 2661 / JAL-1 / JCM 10045 / NBRC 100440) (Methanococcus jannaschii).